Consider the following 647-residue polypeptide: C2H2 finger domain transcription factor USV101 (647 aa).

Positions 1–10 are enriched in basic and acidic residues; the sequence is MSFVAPDDRA. The disordered stretch occupies residues 1 to 132; that stretch reads MSFVAPDDRA…ATGYTPDGQP (132 aa). Composition is skewed to polar residues over residues 27-54 and 66-84; these read ESTS…SPNQ and SSHS…STAY. The segment covering 97 to 122 has biased composition (low complexity); sequence PTQQQQQQQSEQHIPSPPSSSNRPPS. 2 consecutive C2H2-type zinc fingers follow at residues 144–169 and 175–197; these read FRCR…VRKH and FPCH…ATVH. Positions 220–647 are disordered; it reads QRASREQRRR…VKQQDDKKTQ (428 aa). Residues 222–248 are compositionally biased toward basic and acidic residues; that stretch reads ASREQRRRGEVVEVPKGAVERRRETRK. The span at 249–259 shows a compositional bias: low complexity; sequence AQAAAAQAAAA. Residues 261–278 show a composition bias toward polar residues; the sequence is GHSQQNSPYAQYHESQWN. Composition is skewed to low complexity over residues 312–327, 404–414, and 421–434; these read SSSA…YDSA, HGAYPPHDAAA, and GYYH…GSYP. The segment covering 504-515 has biased composition (basic and acidic residues); the sequence is RAEDDFGKDDRK. Positions 521-540 are enriched in low complexity; sequence SPSNSQVPDSSTAAHANGAH. A compositionally biased stretch (basic and acidic residues) spans 628-647; that stretch reads VDKEREKKEEVKQQDDKKTQ.

The protein localises to the nucleus. It localises to the cytoplasm. In terms of biological role, transcription factor that promotes pheromone gene expression, which results in a subsequent increase in cell fusion. Also promotes production of melanin and capsule and thereby is required for full virulence. The sequence is that of C2H2 finger domain transcription factor USV101 from Cryptococcus neoformans var. grubii serotype A (strain H99 / ATCC 208821 / CBS 10515 / FGSC 9487) (Filobasidiella neoformans var. grubii).